The following is a 570-amino-acid chain: Sulfite reductase [NADPH] hemoprotein beta-component (570 aa).

The [4Fe-4S] cluster site is built by C434, C440, C479, and C483. Residue C483 coordinates siroheme.

The protein belongs to the nitrite and sulfite reductase 4Fe-4S domain family. As to quaternary structure, alpha(8)-beta(8). The alpha component is a flavoprotein, the beta component is a hemoprotein. Siroheme is required as a cofactor. It depends on [4Fe-4S] cluster as a cofactor.

It catalyses the reaction hydrogen sulfide + 3 NADP(+) + 3 H2O = sulfite + 3 NADPH + 4 H(+). The protein operates within sulfur metabolism; hydrogen sulfide biosynthesis; hydrogen sulfide from sulfite (NADPH route): step 1/1. Its function is as follows. Component of the sulfite reductase complex that catalyzes the 6-electron reduction of sulfite to sulfide. This is one of several activities required for the biosynthesis of L-cysteine from sulfate. This Salmonella arizonae (strain ATCC BAA-731 / CDC346-86 / RSK2980) protein is Sulfite reductase [NADPH] hemoprotein beta-component.